Reading from the N-terminus, the 368-residue chain is Probable auxin efflux carrier component 5b (368 aa).

10 helical membrane-spanning segments follow: residues V7–S27, C39–A59, V71–A91, C114–L134, L145–F165, V227–I247, V251–A271, L286–L306, L312–A332, and I347–I367.

The protein belongs to the auxin efflux carrier (TC 2.A.69.1) family. Expressed at low levels in roots and shoot apex.

It is found in the membrane. Functionally, may act as a component of the auxin efflux carrier. The protein is Probable auxin efflux carrier component 5b of Oryza sativa subsp. japonica (Rice).